A 319-amino-acid polypeptide reads, in one-letter code: Major intracellular serine protease (319 aa).

Positions 1–17 (MNGEIRLIPYVTNEQIM) are excised as a propeptide. In terms of domain architecture, Peptidase S8 spans 23–307 (PEGIKVIKAP…FLYLTAPDEL (285 aa)). Catalysis depends on charge relay system residues aspartate 50, histidine 87, and serine 246.

Belongs to the peptidase S8 family. Homodimer.

It is found in the cytoplasm. Its function is as follows. Major intracellular protease produced by Bacillus subtilis. In Bacillus subtilis (strain 168), this protein is Major intracellular serine protease (isp).